The sequence spans 321 residues: DNA repair and recombination protein RadA (321 aa).

111 to 118 is an ATP binding site; the sequence is GEFGSGKT.

It belongs to the eukaryotic RecA-like protein family.

Its function is as follows. Involved in DNA repair and in homologous recombination. Binds and assemble on single-stranded DNA to form a nucleoprotein filament. Hydrolyzes ATP in a ssDNA-dependent manner and promotes DNA strand exchange between homologous DNA molecules. This Sulfolobus acidocaldarius (strain ATCC 33909 / DSM 639 / JCM 8929 / NBRC 15157 / NCIMB 11770) protein is DNA repair and recombination protein RadA.